The chain runs to 438 residues: Adenylyltransferase and sulfurtransferase MOCS3 (438 aa).

ATP-binding positions include Gly80, Asp101, 108-112 (TNLHR), Lys125, and 169-170 (DN). 2 residues coordinate Zn(2+): Cys210 and Cys213. Cys227 functions as the Glycyl thioester intermediate; for adenylyltransferase activity in the catalytic mechanism. Cys285 and Cys288 together coordinate Zn(2+). In terms of domain architecture, Rhodanese spans 335 to 436 (SKQRHVLVDV…WTRNVDKEFP (102 aa)). Cys392 (cysteine persulfide intermediate; for sulfurtransferase activity) is an active-site residue.

The protein in the N-terminal section; belongs to the HesA/MoeB/ThiF family. UBA4 subfamily. Zn(2+) serves as cofactor.

The protein localises to the cytoplasm. Its subcellular location is the cytosol. The enzyme catalyses [molybdopterin-synthase sulfur-carrier protein]-C-terminal Gly-Gly + ATP + H(+) = [molybdopterin-synthase sulfur-carrier protein]-C-terminal Gly-Gly-AMP + diphosphate. It carries out the reaction [molybdopterin-synthase sulfur-carrier protein]-C-terminal Gly-Gly-AMP + S-sulfanyl-L-cysteinyl-[cysteine desulfurase] + AH2 = [molybdopterin-synthase sulfur-carrier protein]-C-terminal-Gly-aminoethanethioate + L-cysteinyl-[cysteine desulfurase] + A + AMP + 2 H(+). It participates in tRNA modification; 5-methoxycarbonylmethyl-2-thiouridine-tRNA biosynthesis. It functions in the pathway cofactor biosynthesis; molybdopterin biosynthesis. In terms of biological role, plays a central role in 2-thiolation of mcm(5)S(2)U at tRNA wobble positions of cytosolic tRNA(Lys), tRNA(Glu) and tRNA(Gln). Also essential during biosynthesis of the molybdenum cofactor. Acts by mediating the C-terminal thiocarboxylation of sulfur carriers URM1 and MOCS2A. Its N-terminus first activates URM1 and MOCS2A as acyl-adenylates (-COAMP), then the persulfide sulfur on the catalytic cysteine is transferred to URM1 and MOCS2A to form thiocarboxylation (-COSH) of their C-terminus. The reaction probably involves hydrogen sulfide that is generated from the persulfide intermediate and that acts as a nucleophile towards URM1 and MOCS2A. Subsequently, a transient disulfide bond is formed. Does not use thiosulfate as sulfur donor; NFS1 probably acting as a sulfur donor for thiocarboxylation reactions. The protein is Adenylyltransferase and sulfurtransferase MOCS3 of Culex quinquefasciatus (Southern house mosquito).